A 164-amino-acid chain; its full sequence is Lipoprotein signal peptidase (164 aa).

Helical transmembrane passes span 6-26 (LGVLAGIVALVLDQVTKLWLL), 39-59 (VLPFFDLVLAWNTGISYGWFS), 65-85 (GQILMLAFKAVAIVALAIWMA), and 88-108 (TTKLATIGLGLIIGGAIGNAI). Active-site residues include Asp-118 and Asp-140. The chain crosses the membrane as a helical span at residues 141–161 (VAIVVGVAALLYDSLIGLPAA).

The protein belongs to the peptidase A8 family.

It localises to the cell inner membrane. The enzyme catalyses Release of signal peptides from bacterial membrane prolipoproteins. Hydrolyzes -Xaa-Yaa-Zaa-|-(S,diacylglyceryl)Cys-, in which Xaa is hydrophobic (preferably Leu), and Yaa (Ala or Ser) and Zaa (Gly or Ala) have small, neutral side chains.. Its pathway is protein modification; lipoprotein biosynthesis (signal peptide cleavage). Its function is as follows. This protein specifically catalyzes the removal of signal peptides from prolipoproteins. This is Lipoprotein signal peptidase from Rhodopseudomonas palustris (strain ATCC BAA-98 / CGA009).